The following is a 406-amino-acid chain: Peptidase T (406 aa).

His-81 contributes to the Zn(2+) binding site. Residue Asp-83 is part of the active site. Asp-142 contributes to the Zn(2+) binding site. Glu-176 serves as the catalytic Proton acceptor. Zn(2+) contacts are provided by Glu-177, Asp-199, and His-381.

The protein belongs to the peptidase M20B family. Zn(2+) is required as a cofactor.

Its subcellular location is the cytoplasm. It carries out the reaction Release of the N-terminal residue from a tripeptide.. Its function is as follows. Cleaves the N-terminal amino acid of tripeptides. This is Peptidase T from Streptococcus suis (strain 98HAH33).